The sequence spans 240 residues: MSASVAARWVVLDIEGTLTPTSQVHVVLYDYARPRLGPWIHDHPEDPVVRKAVEDVKSEAGLPAEATAEQVVAVLHGWMDADRKAAPLKTLQGLIWQDGYARGELTTDYFADVVPALRAWRQRGLVLAVFSSGSVAGQVASFSHTTSGDLRGLFAQHFDTVNAGPKRERGSYEAIAAALGAARPLQIVFLSDVPAELDAAAQAGWHTVGLARPGEPYADADFGSHPAVGAFDDIDIEVVS.

It belongs to the HAD-like hydrolase superfamily. MasA/MtnC family. As to quaternary structure, monomer. It depends on Mg(2+) as a cofactor.

The catalysed reaction is 5-methylsulfanyl-2,3-dioxopentyl phosphate + H2O = 1,2-dihydroxy-5-(methylsulfanyl)pent-1-en-3-one + phosphate. The protein operates within amino-acid biosynthesis; L-methionine biosynthesis via salvage pathway; L-methionine from S-methyl-5-thio-alpha-D-ribose 1-phosphate: step 3/6. It functions in the pathway amino-acid biosynthesis; L-methionine biosynthesis via salvage pathway; L-methionine from S-methyl-5-thio-alpha-D-ribose 1-phosphate: step 4/6. In terms of biological role, bifunctional enzyme that catalyzes the enolization of 2,3-diketo-5-methylthiopentyl-1-phosphate (DK-MTP-1-P) into the intermediate 2-hydroxy-3-keto-5-methylthiopentenyl-1-phosphate (HK-MTPenyl-1-P), which is then dephosphorylated to form the acireductone 1,2-dihydroxy-3-keto-5-methylthiopentene (DHK-MTPene). The protein is Enolase-phosphatase E1 of Saccharopolyspora erythraea (strain ATCC 11635 / DSM 40517 / JCM 4748 / NBRC 13426 / NCIMB 8594 / NRRL 2338).